The following is a 469-amino-acid chain: Ribulose bisphosphate carboxylase large chain (469 aa).

Substrate is bound by residues Asn-115 and Thr-165. Residue Lys-167 is the Proton acceptor of the active site. A substrate-binding site is contributed by Lys-169. Mg(2+)-binding residues include Lys-193, Asp-195, and Glu-196. The residue at position 193 (Lys-193) is an N6-carboxylysine. His-286 (proton acceptor) is an active-site residue. Arg-287, His-319, and Ser-371 together coordinate substrate.

The protein belongs to the RuBisCO large chain family. Type I subfamily. In terms of assembly, heterohexadecamer of 8 large chains and 8 small chains. Mg(2+) is required as a cofactor.

It localises to the plastid. The protein localises to the organellar chromatophore. It catalyses the reaction 2 (2R)-3-phosphoglycerate + 2 H(+) = D-ribulose 1,5-bisphosphate + CO2 + H2O. It carries out the reaction D-ribulose 1,5-bisphosphate + O2 = 2-phosphoglycolate + (2R)-3-phosphoglycerate + 2 H(+). Functionally, ruBisCO catalyzes two reactions: the carboxylation of D-ribulose 1,5-bisphosphate, the primary event in carbon dioxide fixation, as well as the oxidative fragmentation of the pentose substrate. Both reactions occur simultaneously and in competition at the same active site. The polypeptide is Ribulose bisphosphate carboxylase large chain (Paulinella chromatophora).